Reading from the N-terminus, the 137-residue chain is MPTINQLVRKPRKSKVEKSKSPALNVGYNSHKKVQTNVSSPQKRGVATRVGTMTPKKPNSALRKFARVRLSNLIEVTAYIPGIGHNLQEHSVVLLRGGRVKDLPGVRYHIVRGALDTAGVTDRKQGRSKYGTKKPKA.

The disordered stretch occupies residues 1-57 (MPTINQLVRKPRKSKVEKSKSPALNVGYNSHKKVQTNVSSPQKRGVATRVGTMTPKK). Asp-102 bears the 3-methylthioaspartic acid mark.

Belongs to the universal ribosomal protein uS12 family. Part of the 30S ribosomal subunit. Contacts proteins S8 and S17. May interact with IF1 in the 30S initiation complex.

Functionally, with S4 and S5 plays an important role in translational accuracy. In terms of biological role, interacts with and stabilizes bases of the 16S rRNA that are involved in tRNA selection in the A site and with the mRNA backbone. Located at the interface of the 30S and 50S subunits, it traverses the body of the 30S subunit contacting proteins on the other side and probably holding the rRNA structure together. The combined cluster of proteins S8, S12 and S17 appears to hold together the shoulder and platform of the 30S subunit. In Streptococcus sanguinis (strain SK36), this protein is Small ribosomal subunit protein uS12.